The following is a 154-amino-acid chain: Protein-export protein SecB (154 aa).

This sequence belongs to the SecB family. As to quaternary structure, homotetramer, a dimer of dimers. One homotetramer interacts with 1 SecA dimer.

The protein localises to the cytoplasm. Its function is as follows. One of the proteins required for the normal export of preproteins out of the cell cytoplasm. It is a molecular chaperone that binds to a subset of precursor proteins, maintaining them in a translocation-competent state. It also specifically binds to its receptor SecA. This chain is Protein-export protein SecB, found in Buchnera aphidicola subsp. Schizaphis graminum (strain Sg).